A 347-amino-acid chain; its full sequence is MTQSLTIRRPDDWHLHLRDGAMMRAVLPETARHFARAIIMPNLVPPVVTAQDALAYRDRIEAALPDGADFTPLMTLYLTEQTDPDDVEAAFADGLIHAVKLYPAGATTNSQSGVATLKNVYPVLERMAQIGLPLCIHGEVTDPQVDIFDREQAFIDTVLIPLRADLPDLKVTLEHITTSHGIDYVVGADGDIAGTITTHHLMINRNHMLVGGIRPHYYCLPIVKRASHQHALRRAATSGHPRFFLGTDSAPHLDGAKETACGCAGVFSATNTMSCLAHVFDEDGALVNLEAFTSLNGPARYGLAPNAATMTLEKRDHPTNYPAKFDTDDGPLTLFDPSTPLYWHVKD.

Positions 14 and 16 each coordinate Zn(2+). Substrate-binding positions include 16-18 and Asn42; that span reads HLR. 3 residues coordinate Zn(2+): Lys100, His137, and His175. Lys100 carries the N6-carboxylysine modification. Residue His137 coordinates substrate. Substrate is bound at residue Leu220. Residue Asp248 coordinates Zn(2+). Asp248 is an active-site residue. Residues His252 and Ala264 each coordinate substrate.

This sequence belongs to the metallo-dependent hydrolases superfamily. DHOase family. Class II DHOase subfamily. Homodimer. The cofactor is Zn(2+).

The catalysed reaction is (S)-dihydroorotate + H2O = N-carbamoyl-L-aspartate + H(+). The protein operates within pyrimidine metabolism; UMP biosynthesis via de novo pathway; (S)-dihydroorotate from bicarbonate: step 3/3. Functionally, catalyzes the reversible cyclization of carbamoyl aspartate to dihydroorotate. The protein is Dihydroorotase of Jannaschia sp. (strain CCS1).